We begin with the raw amino-acid sequence, 458 residues long: ATP synthase subunit beta (458 aa).

An ATP-binding site is contributed by 148 to 155 (GGAGVGKT).

This sequence belongs to the ATPase alpha/beta chains family. F-type ATPases have 2 components, CF(1) - the catalytic core - and CF(0) - the membrane proton channel. CF(1) has five subunits: alpha(3), beta(3), gamma(1), delta(1), epsilon(1). CF(0) has three main subunits: a(1), b(2) and c(9-12). The alpha and beta chains form an alternating ring which encloses part of the gamma chain. CF(1) is attached to CF(0) by a central stalk formed by the gamma and epsilon chains, while a peripheral stalk is formed by the delta and b chains.

The protein resides in the cell inner membrane. The catalysed reaction is ATP + H2O + 4 H(+)(in) = ADP + phosphate + 5 H(+)(out). Produces ATP from ADP in the presence of a proton gradient across the membrane. The catalytic sites are hosted primarily by the beta subunits. This Stutzerimonas stutzeri (strain A1501) (Pseudomonas stutzeri) protein is ATP synthase subunit beta.